Here is a 290-residue protein sequence, read N- to C-terminus: 4-hydroxybenzoate octaprenyltransferase (290 aa).

Helical transmembrane passes span 24 to 44 (IGFF…HKGI), 48 to 68 (VVLI…CIIN), 98 to 118 (LVAL…LNFI), 142 to 162 (FPQV…FTAI), 171 to 191 (WLLF…YAMI), 214 to 234 (FLIG…GWKE), 239 to 259 (VFYF…QILI), and 270 to 290 (AFLS…SSFH).

It belongs to the UbiA prenyltransferase family. It depends on Mg(2+) as a cofactor.

It is found in the cell inner membrane. It catalyses the reaction all-trans-octaprenyl diphosphate + 4-hydroxybenzoate = 4-hydroxy-3-(all-trans-octaprenyl)benzoate + diphosphate. Its pathway is cofactor biosynthesis; ubiquinone biosynthesis. Catalyzes the prenylation of para-hydroxybenzoate (PHB) with an all-trans polyprenyl group. Mediates the second step in the final reaction sequence of ubiquinone-8 (UQ-8) biosynthesis, which is the condensation of the polyisoprenoid side chain with PHB, generating the first membrane-bound Q intermediate 3-octaprenyl-4-hydroxybenzoate. In Blochmanniella pennsylvanica (strain BPEN), this protein is 4-hydroxybenzoate octaprenyltransferase.